The following is a 466-amino-acid chain: Glutamate--tRNA ligase 2 (466 aa).

A 'HIGH' region motif is present at residues Pro9 to Gly19. The 'KMSKS' region motif lies at Lys236–Arg240. Residue Lys239 participates in ATP binding.

The protein belongs to the class-I aminoacyl-tRNA synthetase family. Glutamate--tRNA ligase type 1 subfamily. Monomer.

The protein resides in the cytoplasm. It catalyses the reaction tRNA(Glu) + L-glutamate + ATP = L-glutamyl-tRNA(Glu) + AMP + diphosphate. Its function is as follows. Catalyzes the attachment of glutamate to tRNA(Glu) in a two-step reaction: glutamate is first activated by ATP to form Glu-AMP and then transferred to the acceptor end of tRNA(Glu). The protein is Glutamate--tRNA ligase 2 of Anaplasma marginale (strain St. Maries).